The sequence spans 147 residues: NADH-ubiquinone oxidoreductase chain 3 (147 aa).

Helical transmembrane passes span 6–26, 60–80, and 84–104; these read LFIL…LVFA, AICF…VGSL, and TFYS…GFVF.

It belongs to the complex I subunit 3 family.

It localises to the mitochondrion membrane. The catalysed reaction is a ubiquinone + NADH + 5 H(+)(in) = a ubiquinol + NAD(+) + 4 H(+)(out). In terms of biological role, core subunit of the mitochondrial membrane respiratory chain NADH dehydrogenase (Complex I) that is believed to belong to the minimal assembly required for catalysis. Complex I functions in the transfer of electrons from NADH to the respiratory chain. The immediate electron acceptor for the enzyme is believed to be ubiquinone. In Neurospora crassa (strain ATCC 24698 / 74-OR23-1A / CBS 708.71 / DSM 1257 / FGSC 987), this protein is NADH-ubiquinone oxidoreductase chain 3 (ndh-3).